Reading from the N-terminus, the 198-residue chain is CASP-like protein 2B1 (198 aa).

The Cytoplasmic portion of the chain corresponds to 1 to 12 (MAAAMGLERKAK). The chain crosses the membrane as a helical span at residues 13 to 33 (VAEVALRCAVCALAALAAALV). Residues 34–55 (GTGSQTRTFFSLEKKARFTDMK) lie on the Extracellular side of the membrane. Residues 56-76 (ALVLLVAAHGAAAVYSLLQLA) form a helical membrane-spanning segment. Residues 77–91 (RCAAAAAWKGGSNGG) lie on the Cytoplasmic side of the membrane. The chain crosses the membrane as a helical span at residues 92 to 112 (AAVVAWSVFSCDQAVAYALMA). The Extracellular portion of the chain corresponds to 113-149 (ATAAALQSSVVGKRGQPELQWMPVCGLYGAFCRRVGE). Residues 150-170 (GLAAAVAAGLAAVLLAAVSAF) form a helical membrane-spanning segment. Over 171-198 (NLFRLYGGGGGGRKSSAGAVSGNGANTW) the chain is Cytoplasmic.

This sequence belongs to the Casparian strip membrane proteins (CASP) family. Homodimer and heterodimers.

The protein resides in the cell membrane. In Oryza sativa subsp. japonica (Rice), this protein is CASP-like protein 2B1.